We begin with the raw amino-acid sequence, 413 residues long: Dual-specificity RNA methyltransferase RlmN (413 aa).

Glu126 (proton acceptor) is an active-site residue. Residues 132–381 (EEGRGTLCIS…IRTPRGRDIL (250 aa)) enclose the Radical SAM core domain. A disulfide bond links Cys139 and Cys384. Positions 146, 150, and 153 each coordinate [4Fe-4S] cluster. S-adenosyl-L-methionine contacts are provided by residues 210-211 (GE), Ser242, 264-266 (SLH), and Asn341. Residue Cys384 is the S-methylcysteine intermediate of the active site.

Belongs to the radical SAM superfamily. RlmN family. [4Fe-4S] cluster serves as cofactor.

It localises to the cytoplasm. It carries out the reaction adenosine(2503) in 23S rRNA + 2 reduced [2Fe-2S]-[ferredoxin] + 2 S-adenosyl-L-methionine = 2-methyladenosine(2503) in 23S rRNA + 5'-deoxyadenosine + L-methionine + 2 oxidized [2Fe-2S]-[ferredoxin] + S-adenosyl-L-homocysteine. It catalyses the reaction adenosine(37) in tRNA + 2 reduced [2Fe-2S]-[ferredoxin] + 2 S-adenosyl-L-methionine = 2-methyladenosine(37) in tRNA + 5'-deoxyadenosine + L-methionine + 2 oxidized [2Fe-2S]-[ferredoxin] + S-adenosyl-L-homocysteine. In terms of biological role, specifically methylates position 2 of adenine 2503 in 23S rRNA and position 2 of adenine 37 in tRNAs. m2A2503 modification seems to play a crucial role in the proofreading step occurring at the peptidyl transferase center and thus would serve to optimize ribosomal fidelity. The chain is Dual-specificity RNA methyltransferase RlmN from Sinorhizobium medicae (strain WSM419) (Ensifer medicae).